The primary structure comprises 206 residues: Outer-membrane lipoprotein carrier protein (206 aa).

The first 21 residues, 1-21 (MKKLLCAVLLSPLLYSNAVLA), serve as a signal peptide directing secretion.

The protein belongs to the LolA family. As to quaternary structure, monomer.

The protein resides in the periplasm. In terms of biological role, participates in the translocation of lipoproteins from the inner membrane to the outer membrane. Only forms a complex with a lipoprotein if the residue after the N-terminal Cys is not an aspartate (The Asp acts as a targeting signal to indicate that the lipoprotein should stay in the inner membrane). The sequence is that of Outer-membrane lipoprotein carrier protein from Shewanella oneidensis (strain ATCC 700550 / JCM 31522 / CIP 106686 / LMG 19005 / NCIMB 14063 / MR-1).